Consider the following 213-residue polypeptide: Adenylate kinase (213 aa).

10–15 (GSGKGS) contacts ATP. The segment at 30–60 (STGNLFRAILKEDSELARKIKEINVSGGKLV) is NMP. AMP contacts are provided by residues threonine 31, arginine 36, 58-60 (KLV), 87-90 (GYPR), and glutamine 94. The tract at residues 123 to 160 (GRWMCPKCAGIYNIHFKKPQVHGLCDNDQATLYQRADD) is LID. Arginine 124 is a binding site for ATP. Cysteine 127 and cysteine 130 together coordinate Zn(2+). 133–134 (IY) lines the ATP pocket. 2 residues coordinate Zn(2+): cysteine 147 and aspartate 150. Residues arginine 157 and arginine 168 each coordinate AMP. Glutamine 196 lines the ATP pocket.

Belongs to the adenylate kinase family. As to quaternary structure, monomer.

Its subcellular location is the cytoplasm. It catalyses the reaction AMP + ATP = 2 ADP. Its pathway is purine metabolism; AMP biosynthesis via salvage pathway; AMP from ADP: step 1/1. In terms of biological role, catalyzes the reversible transfer of the terminal phosphate group between ATP and AMP. Plays an important role in cellular energy homeostasis and in adenine nucleotide metabolism. This Ureaplasma parvum serovar 3 (strain ATCC 27815 / 27 / NCTC 11736) protein is Adenylate kinase.